Here is a 364-residue protein sequence, read N- to C-terminus: Protein leg1b (364 aa).

The signal sequence occupies residues 1–22; the sequence is MSEMGFLRSVAAVLLLAVFSHA. N-linked (GlcNAc...) asparagine glycosylation is present at Asn-70.

Belongs to the LEG1 family. As to expression, detected in all tissues tested, with the highest levels in serum (at protein level). At mRNA level, only expressed in liver.

Its subcellular location is the secreted. Functionally, involved in early development of liver, exocrine pancreas and intestine, probably through cell cycle regulation. In liver, its function is partially redundant with leg1a function. The protein is Protein leg1b of Danio rerio (Zebrafish).